The sequence spans 353 residues: UDP-3-O-acylglucosamine N-acyltransferase (353 aa).

The Proton acceptor role is filled by H258.

This sequence belongs to the transferase hexapeptide repeat family. LpxD subfamily. Homotrimer.

The enzyme catalyses a UDP-3-O-[(3R)-3-hydroxyacyl]-alpha-D-glucosamine + a (3R)-hydroxyacyl-[ACP] = a UDP-2-N,3-O-bis[(3R)-3-hydroxyacyl]-alpha-D-glucosamine + holo-[ACP] + H(+). It participates in bacterial outer membrane biogenesis; LPS lipid A biosynthesis. In terms of biological role, catalyzes the N-acylation of UDP-3-O-acylglucosamine using 3-hydroxyacyl-ACP as the acyl donor. Is involved in the biosynthesis of lipid A, a phosphorylated glycolipid that anchors the lipopolysaccharide to the outer membrane of the cell. This chain is UDP-3-O-acylglucosamine N-acyltransferase, found in Parvibaculum lavamentivorans (strain DS-1 / DSM 13023 / NCIMB 13966).